A 354-amino-acid polypeptide reads, in one-letter code: Replication factor C subunit 5 (354 aa).

Residues valine 5, serine 17, 43 to 51 (GPNGTGKKT), and arginine 231 contribute to the ATP site.

This sequence belongs to the activator 1 small subunits family. As to quaternary structure, replication factor C (RFC) is a heteropentamer of subunits RFC1, RFC2, RFC3, RFC4 and RFC5 and forms a complex with POL30/PCNA in the presence of ATP. Component of the RAD24-RFC complex which consists of RAD24, RFC2, RFC3, RFC4 and RFC5 and associates with the checkpoint clamp DDC1:MEC3:RAD17 complex. Component of the ELG1-RFC complex which consists of ELG1, RFC2, RFC3, RFC4 and RFC5. Component of the CTF18-RFC complex, which consists of CTF18, CTF8, DCC1, RFC2, RFC3, RFC4 and RFC5. RFC5 interacts with ECO1.

The protein localises to the nucleus. Its function is as follows. Component of ATP-dependent clamp loader (RFC and RFC-like) complexes for DNA clamps, such as the POL30/PCNA homotrimer and the checkpoint clamp DDC1:MEC3:RAD17 complex. During a clamp loading circle, the RFC:clamp complex binds to DNA and the recognition of the double-stranded/single-stranded junction stimulates ATP hydrolysis by RFC. The complex presumably provides bipartite ATP sites in which one subunit supplies a catalytic site for hydrolysis of ATP bound to the neighboring subunit. Dissociation of RFC from the clamp leaves the clamp encircling DNA. Component of the replication factor C (RFC or activator 1) complex which loads POL30/PCNA and acts during elongation of primed DNA templates by DNA polymerase delta and epsilon. RFC has an essential but redundant activity in sister chromatid cohesion establishment. Component of the RFC-like complex CTF18-RFC which is required for efficient establishment of chromosome cohesion during S-phase and may load or unload POL30/PCNA. Component of the RFC-like RAD24-RFC complex which loads the checkpoint clamp DDC1:MEC3:RAD17 complex and is involved in DNA repair pathways. Component of the RFC-like ELG1-RFC complex which appears to have a role in DNA replication, replication fork re-start, recombination and repair. This chain is Replication factor C subunit 5 (RFC5), found in Saccharomyces cerevisiae (strain ATCC 204508 / S288c) (Baker's yeast).